Consider the following 214-residue polypeptide: uncharacterized protein (214 aa).

This is an uncharacterized protein from Rhodobacter capsulatus (Rhodopseudomonas capsulata).